The sequence spans 529 residues: uncharacterized protein (529 aa).

2 consecutive ABC transporter domains span residues 6–257 (LAIE…QKLL) and 287–526 (IRKG…RQLL). ATP-binding positions include 42–49 (GESGSGKS) and 319–326 (GESGSGKS).

It belongs to the ABC transporter superfamily.

This is an uncharacterized protein from Escherichia coli (strain K12).